The following is a 437-amino-acid chain: Argininosuccinate lyase (437 aa).

This sequence belongs to the lyase 1 family. Argininosuccinate lyase subfamily.

Its subcellular location is the cytoplasm. It catalyses the reaction 2-(N(omega)-L-arginino)succinate = fumarate + L-arginine. It functions in the pathway amino-acid biosynthesis; L-arginine biosynthesis; L-arginine from L-ornithine and carbamoyl phosphate: step 3/3. This chain is Argininosuccinate lyase, found in Clostridium novyi (strain NT).